The following is a 179-amino-acid chain: Endoribonuclease YbeY (179 aa).

H141, H145, and H151 together coordinate Zn(2+).

This sequence belongs to the endoribonuclease YbeY family. Requires Zn(2+) as cofactor.

The protein localises to the cytoplasm. In terms of biological role, single strand-specific metallo-endoribonuclease involved in late-stage 70S ribosome quality control and in maturation of the 3' terminus of the 16S rRNA. This is Endoribonuclease YbeY from Synechocystis sp. (strain ATCC 27184 / PCC 6803 / Kazusa).